A 144-amino-acid polypeptide reads, in one-letter code: MHYKHILAAIDLSPRSQEVIDRAAEVAASNNATLDVVHVIEHSPVAYGGEFSIPINVNLEQTIESEARKALTELCHTVKVPSERQHTLSGVVKHMVIELAEKLNIDLIVVGTHGHHGLDKLLGSRANAILHVATCDVLAVWMKE.

Belongs to the universal stress protein A family. As to quaternary structure, homodimer.

It localises to the cytoplasm. Involved in stress response. In Coxiella burnetii (strain RSA 493 / Nine Mile phase I), this protein is Universal stress protein A homolog 1 (uspA1).